The chain runs to 196 residues: Riboflavin transporter RibU (196 aa).

5 helical membrane passes run 14–34 (LIAILSAISFGLMLFPQVPII), 46–66 (IVPVVIGLYWLNYSASLWVIL), 80–100 (VNTYLGLPVNLLVVLAFITVL), 120–140 (LISSTFVMTIVAIVINWFVAI), and 164–184 (MVLPFNLIEGIIWFVVSMIIL).

Belongs to the prokaryotic riboflavin transporter (P-RFT) (TC 2.A.87) family. In E.coli forms a stable energy-coupling factor (ECF) transporter complex probably composed of a membrane-embedded substrate-binding protein (S component), 2 ATP-binding proteins (A components) and 2 transmembrane proteins (T component). May be able to interact with more than 1 S component at a time.

The protein localises to the cell membrane. Probable riboflavin-binding protein that interacts with the energy-coupling factor (ECF) ABC-transporter complex. Unlike classic ABC transporters this ECF transporter provides the energy necessary to transport a number of different substrates. The substrates themselves are bound by transmembrane, not extracytoplasmic soluble proteins and transport it into cells. The chain is Riboflavin transporter RibU (ribU) from Leuconostoc mesenteroides subsp. mesenteroides (strain ATCC 8293 / DSM 20343 / BCRC 11652 / CCM 1803 / JCM 6124 / NCDO 523 / NBRC 100496 / NCIMB 8023 / NCTC 12954 / NRRL B-1118 / 37Y).